Consider the following 603-residue polypeptide: Podocalyxin-like protein 2 (603 aa).

The signal sequence occupies residues 1–28 (MARPLRAARLPPPLLLLLAAGASLGAYA). Residues 29–499 (VGVDEPGPEG…ATQVRSDYGT (471 aa)) lie on the Extracellular side of the membrane. A disordered region spans residues 53-92 (FEPLDSEEPSEAMGLDAGLAPGSGFPSEDSEESRLLQPPQ). Ser75 is a glycosylation site (O-linked (Xyl...) (chondroitin sulfate) serine). Tyr93 carries the sulfotyrosine modification. Residue Asn101 is glycosylated (N-linked (GlcNAc...) asparagine). The residue at position 113 (Tyr113) is a Sulfotyrosine. Residues 124–368 (SMEDPGQAPD…LEGQAAEAHS (245 aa)) form a disordered region. The span at 156 to 187 (QEEEEEEEEEEEEREEEEREKEAEEEEEEEEL) shows a compositional bias: acidic residues. Positions 196 to 216 (ATAQAHAPSPSTSSSTSSQSP) are enriched in low complexity. 3 stretches are compositionally biased toward polar residues: residues 240–266 (VKPT…QESG), 302–314 (ALPS…TVPP), and 339–349 (DTESTPSSATW). An N-linked (GlcNAc...) asparagine glycan is attached at Asn260. The N-linked (GlcNAc...) asparagine glycan is linked to Asn394. The chain crosses the membrane as a helical span at residues 500-520 (LFVVLVIIGVICFIIIVLGLL). The Cytoplasmic segment spans residues 521-603 (YNCWQRRMPK…SDVFEEDTHL (83 aa)). The span at 558 to 570 (DSQSEMQEKQPSL) shows a compositional bias: polar residues. Residues 558-603 (DSQSEMQEKQPSLNGGAINGPSSWSALMGSKRDPEDSDVFEEDTHL) form a disordered region. Phosphoserine occurs at positions 569 and 594. A compositionally biased stretch (acidic residues) spans 592–603 (EDSDVFEEDTHL).

It belongs to the podocalyxin family. As to quaternary structure, homodimer; disulfide-linked. Interacts with SELL, SELE and SELP. Glycosylated; contains chondroitin sulfate. Displays sialylated O-linked oligosaccharides. In terms of processing, sulfation is necessary for interaction with SELL. Sialylated O-linked oligosaccharides are necessary for interaction with SELL, SELE and SELP.

Its subcellular location is the membrane. Functionally, acts as a ligand for vascular selectins. Mediates rapid rolling of leukocytes over vascular surfaces through high affinity divalent cation-dependent interactions with E-, P- and L-selectins. This Mus musculus (Mouse) protein is Podocalyxin-like protein 2 (Podxl2).